The chain runs to 242 residues: ATP-dependent dethiobiotin synthetase BioD (242 aa).

Residue 12–17 (EVGKTV) coordinates ATP. Thr-16 is a binding site for Mg(2+). Residue Lys-37 is part of the active site. Ser-41 is a substrate binding site. ATP-binding positions include Asp-51 and 112 to 115 (EGAG). Positions 51 and 112 each coordinate Mg(2+).

This sequence belongs to the dethiobiotin synthetase family. As to quaternary structure, homodimer. Mg(2+) serves as cofactor.

The protein localises to the cytoplasm. It catalyses the reaction (7R,8S)-7,8-diammoniononanoate + CO2 + ATP = (4R,5S)-dethiobiotin + ADP + phosphate + 3 H(+). It functions in the pathway cofactor biosynthesis; biotin biosynthesis; biotin from 7,8-diaminononanoate: step 1/2. Functionally, catalyzes a mechanistically unusual reaction, the ATP-dependent insertion of CO2 between the N7 and N8 nitrogen atoms of 7,8-diaminopelargonic acid (DAPA, also called 7,8-diammoniononanoate) to form a ureido ring. This is ATP-dependent dethiobiotin synthetase BioD from Bacillus cereus (strain ATCC 14579 / DSM 31 / CCUG 7414 / JCM 2152 / NBRC 15305 / NCIMB 9373 / NCTC 2599 / NRRL B-3711).